The primary structure comprises 537 residues: CTP synthase (537 aa).

The tract at residues 1-267 is amidoligase domain; sequence MTKYIFVTGG…DQIVCDHLKL (267 aa). S13 lines the CTP pocket. S13 lines the UTP pocket. 14–19 contributes to the ATP binding site; sequence SIGKGI. Residue Y54 coordinates L-glutamine. D71 is an ATP binding site. 2 residues coordinate Mg(2+): D71 and E141. Residues 148–150, 188–193, and K224 contribute to the CTP site; these read DIE and KTKPTQ. Residues 188–193 and K224 contribute to the UTP site; that span reads KTKPTQ. ATP is bound at residue 240–242; the sequence is RDV. One can recognise a Glutamine amidotransferase type-1 domain in the interval 292–535; it reads RIALVGKYVE…VTAAVKNKNQ (244 aa). Residue G354 coordinates L-glutamine. C381 serves as the catalytic Nucleophile; for glutamine hydrolysis. Residues 382 to 385, E405, and R463 each bind L-glutamine; that span reads LGMQ. Catalysis depends on residues H508 and E510.

It belongs to the CTP synthase family. Homotetramer.

It catalyses the reaction UTP + L-glutamine + ATP + H2O = CTP + L-glutamate + ADP + phosphate + 2 H(+). It carries out the reaction L-glutamine + H2O = L-glutamate + NH4(+). The enzyme catalyses UTP + NH4(+) + ATP = CTP + ADP + phosphate + 2 H(+). It functions in the pathway pyrimidine metabolism; CTP biosynthesis via de novo pathway; CTP from UDP: step 2/2. With respect to regulation, allosterically activated by GTP, when glutamine is the substrate; GTP has no effect on the reaction when ammonia is the substrate. The allosteric effector GTP functions by stabilizing the protein conformation that binds the tetrahedral intermediate(s) formed during glutamine hydrolysis. Inhibited by the product CTP, via allosteric rather than competitive inhibition. In terms of biological role, catalyzes the ATP-dependent amination of UTP to CTP with either L-glutamine or ammonia as the source of nitrogen. Regulates intracellular CTP levels through interactions with the four ribonucleotide triphosphates. The protein is CTP synthase of Streptococcus equi subsp. equi (strain 4047).